Here is a 664-residue protein sequence, read N- to C-terminus: Kinesin-like protein KIF2B (664 aa).

The residue at position 125 (Thr125) is a Phosphothreonine; by PLK1. Residues 149-177 (CLREIEKLQKQREKRRRLQLEIRARRALD) are a coiled coil. Residue Ser204 is modified to Phosphoserine; by PLK1. The 331-residue stretch at 213–543 (RICVCVRKRP…LRYANRVKEL (331 aa)) folds into the Kinesin motor domain. 303–310 (GQTGSGKT) is an ATP binding site. The segment at 583–607 (VQKEEEKESDELTSTKEPAASWSRS) is disordered. A coiled-coil region spans residues 642–663 (VLTEIQKKLQLLRDDLQKKSQA).

The protein belongs to the TRAFAC class myosin-kinesin ATPase superfamily. Kinesin family. MCAK/KIF2 subfamily. Phosphorylation at Thr-125 by PLK1 is required for activity in the correction of kinetochore-microtubules attachment errors, while phosphorylation at Ser-204 also by PLK1 is required for the kinetochore localization and activity in prometaphase.

The protein localises to the cytoplasm. It localises to the cytoskeleton. The protein resides in the microtubule organizing center. Its subcellular location is the centrosome. It is found in the spindle. The protein localises to the chromosome. It localises to the centromere. The protein resides in the kinetochore. Functionally, plus end-directed microtubule-dependent motor required for spindle assembly and chromosome movement. Has microtubule depolymerization activity. Plays a role in chromosome congression. This is Kinesin-like protein KIF2B from Rattus norvegicus (Rat).